The chain runs to 170 residues: Adenine phosphoribosyltransferase (170 aa).

This sequence belongs to the purine/pyrimidine phosphoribosyltransferase family. In terms of assembly, homodimer.

Its subcellular location is the cytoplasm. It carries out the reaction AMP + diphosphate = 5-phospho-alpha-D-ribose 1-diphosphate + adenine. It participates in purine metabolism; AMP biosynthesis via salvage pathway; AMP from adenine: step 1/1. Catalyzes a salvage reaction resulting in the formation of AMP, that is energically less costly than de novo synthesis. This is Adenine phosphoribosyltransferase from Mycoplasmopsis pulmonis (strain UAB CTIP) (Mycoplasma pulmonis).